The sequence spans 353 residues: tRNA-specific 2-thiouridylase MnmA 2 (353 aa).

ATP-binding positions include 9–16 (AMSGGVDS) and Met35. Cys98 acts as the Nucleophile in catalysis. Cys98 and Cys194 are joined by a disulfide. Gly122 lines the ATP pocket. Positions 144-146 (KDQ) are interaction with tRNA. Catalysis depends on Cys194, which acts as the Cysteine persulfide intermediate. Residues 300-301 (RY) form an interaction with tRNA region.

Belongs to the MnmA/TRMU family.

It is found in the cytoplasm. The catalysed reaction is S-sulfanyl-L-cysteinyl-[protein] + uridine(34) in tRNA + AH2 + ATP = 2-thiouridine(34) in tRNA + L-cysteinyl-[protein] + A + AMP + diphosphate + H(+). Its function is as follows. Catalyzes the 2-thiolation of uridine at the wobble position (U34) of tRNA, leading to the formation of s(2)U34. The chain is tRNA-specific 2-thiouridylase MnmA 2 from Clostridium botulinum (strain Loch Maree / Type A3).